A 345-amino-acid chain; its full sequence is Large ribosomal subunit protein uL10 (345 aa).

The segment at 303-345 (SLPQTAAPQQTPQPTEAPKEEAQEEKKEGPSEEEIAGSLASLF) is disordered. The span at 305-318 (PQTAAPQQTPQPTE) shows a compositional bias: low complexity. A compositionally biased stretch (basic and acidic residues) spans 319-332 (APKEEAQEEKKEGP).

This sequence belongs to the universal ribosomal protein uL10 family. In terms of assembly, part of the 50S ribosomal subunit. Forms part of the ribosomal stalk which helps the ribosome interact with GTP-bound translation factors. Forms a heptameric L10(L12)2(L12)2(L12)2 complex, where L10 forms an elongated spine to which the L12 dimers bind in a sequential fashion.

Functionally, forms part of the ribosomal stalk, playing a central role in the interaction of the ribosome with GTP-bound translation factors. In Pyrobaculum aerophilum (strain ATCC 51768 / DSM 7523 / JCM 9630 / CIP 104966 / NBRC 100827 / IM2), this protein is Large ribosomal subunit protein uL10.